We begin with the raw amino-acid sequence, 498 residues long: ADP,ATP carrier protein 1 (498 aa).

The Cytoplasmic segment spans residues 1–33 (MSTTKSDNYISELRKVIWPIERYENKKFLPMAF). The chain crosses the membrane as a helical span at residues 34-54 (MMFCILLNYSTLRSIKDGFVV). Cysteines 37 and 85 form a disulfide. The Extracellular segment spans residues 55-67 (TDIGAEAISFLKT). Residues 68-88 (YIVLPSAVIAMIVYVKLCDIL) traverse the membrane as a helical segment. Over 89–92 (KQEN) the chain is Cytoplasmic. The chain crosses the membrane as a helical span at residues 93–113 (VFYVITSFFLAYFALFAFVLY). Topologically, residues 114 to 147 (PNPDLVHPNPEAIESLSLAYPNFKWFIRIVGKWS) are extracellular. A helical transmembrane segment spans residues 148-168 (FASFYTMAELWGTLMLSLLFW). Over 169 to 184 (QFANQITKTDEAKRFY) the chain is Cytoplasmic. Residues 185–205 (SMFGLLANLALPVTSLIIGYF) form a helical membrane-spanning segment. The Extracellular portion of the chain corresponds to 206–218 (LHEKTQIVAEHLK). Residues 219–239 (FTPLFVIMIISSLAVILTYRW) traverse the membrane as a helical segment. Residues 240-279 (MNKNVLTDPKLYDPALVKGKKAKAKMSLIESFKMIFTSKY) lie on the Cytoplasmic side of the membrane. The helical transmembrane segment at 280–300 (VGYIALLLIAYGISVNLVEGV) threads the bilayer. Over 301–320 (WKSKLKELHPTKEAYTMYMG) the chain is Extracellular. A helical membrane pass occupies residues 321 to 341 (QFQAYQGWVAIAFMIIGSNIL). Topologically, residues 342-348 (RKVSWLT) are cytoplasmic. Residues 349–369 (AAMITPLMMLITGIAFFAFIF) form a helical membrane-spanning segment. Over 370-379 (FDSVIAMYLT) the chain is Extracellular. Residues 380–400 (GILASGPLALAVMIGTIQNVL) traverse the membrane as a helical segment. Over 401–438 (SKGVKYSLFDATKNMAYIPLDKDLRVKGQAAVEVIGGR) the chain is Cytoplasmic. 436 to 442 (GGRFGKS) lines the ATP pocket. The chain crosses the membrane as a helical span at residues 439-459 (FGKSGGAIIQSTFFIIFPALG). Residues 460 to 465 (FVEATP) lie on the Extracellular side of the membrane. The helical transmembrane segment at 466-486 (YFASIFFVIVILWIYAVKGLN) threads the bilayer. At 487–498 (KEYQVLVNNTEK) the chain is on the cytoplasmic side.

It belongs to the ADP/ATP translocase tlc family.

The protein localises to the cell membrane. In terms of biological role, provides the rickettsial cell with host ATP in exchange for rickettsial ADP. This is an obligate exchange system. This energy acquiring activity is an important component of rickettsial parasitism. The protein is ADP,ATP carrier protein 1 (tlcA) of Rickettsia bellii (strain RML369-C).